The primary structure comprises 70 residues: Large ribosomal subunit protein uL29 (70 aa).

This sequence belongs to the universal ribosomal protein uL29 family.

The sequence is that of Large ribosomal subunit protein uL29 from Prochlorococcus marinus (strain MIT 9313).